A 347-amino-acid chain; its full sequence is Cell division protein FtsQ (347 aa).

The tract at residues Met1–Pro55 is disordered. Residues Met1–Lys66 lie on the Cytoplasmic side of the membrane. Residues Pro10–Asp33 show a composition bias toward basic and acidic residues. The chain crosses the membrane as a helical span at residues Ile67–Ala87. At Tyr88–His347 the chain is on the periplasmic side. The 69-residue stretch at Glu98–Arg166 folds into the POTRA domain. The segment at Asp308 to His347 is disordered. Low complexity predominate over residues Ala313–Ala340.

Belongs to the FtsQ/DivIB family. FtsQ subfamily.

It localises to the cell inner membrane. Essential cell division protein. In Koribacter versatilis (strain Ellin345), this protein is Cell division protein FtsQ.